The chain runs to 581 residues: MVISVPLFSSVLLALVVAVPADFDVGGRLLGVGLCSVRGDPNEHYDPHGDLYLRPFLQLDSVHQFYSLVFARKASSAMGASTSTKRPLTSKVTNEGENDRVKYASSAMQGLRMSMQDALAVELDLDALKSTSFFGVYDGHGGAEVAMYCAKRFHVMLREEESFLNNLSYAITSVCSRLDDELEAPNVWRASLYPHRSSESSSESSDCFQFLSTGSCANVWRSSEAVSYKLPSYEGSTACVVIIRGNQITVGNVGDSRCVLSKNGQAIDLSTDHKPNVPLERQRILRVGGQVWREKFPAKDSGGEIREQWGPYCIEGKLSTSRALAGIFLTTISGDFAYKNIVYRPQYQMVTHFPDIRVAKITGDTEFLVIASDGICSIQILIVDLNTFFPFRDHMSSQDVVDFVHEKLNSRRQELCQSLINQGKKRECFTEDSQLATNKNIAPNTTTLGEETLHTTCEKLVENCLESRNNATAILVQFKPGADQPIPALPNIQEGSDEVAGGADQPIPVLPNIQQVSDEVAGGTGQPIPVLPDIQEGSDEVAGGAAVAEQHQHNPEGGGEQQLDLDDALDGEALALLFGQP.

Residues 1–21 form the signal peptide; that stretch reads MVISVPLFSSVLLALVVAVPA. The 377-residue stretch at 102 to 478 folds into the PPM-type phosphatase domain; sequence KYASSAMQGL…NNATAILVQF (377 aa). Mn(2+)-binding residues include D138, G139, D373, and N469. The interval 538–563 is disordered; sequence SDEVAGGAAVAEQHQHNPEGGGEQQL.

This sequence belongs to the PP2C family. The cofactor is Mg(2+). Requires Mn(2+) as cofactor.

The catalysed reaction is O-phospho-L-seryl-[protein] + H2O = L-seryl-[protein] + phosphate. The enzyme catalyses O-phospho-L-threonyl-[protein] + H2O = L-threonyl-[protein] + phosphate. The polypeptide is Putative protein phosphatase 2C 22 (Oryza sativa subsp. japonica (Rice)).